The following is a 367-amino-acid chain: Probable protein phosphatase 2C 67 (367 aa).

The interval 1–79 is disordered; sequence MAHQKREATS…DEKAATNSNV (79 aa). Residues 31–46 show a composition bias toward basic and acidic residues; it reads AEKEHILTSDASHETN. Positions 91 to 365 constitute a PPM-type phosphatase domain; that stretch reads EADAAEDKGC…DNCTAVLIVF (275 aa). 4 residues coordinate Mn(2+): D131, G132, D312, and D356.

This sequence belongs to the PP2C family. Mg(2+) is required as a cofactor. The cofactor is Mn(2+).

It carries out the reaction O-phospho-L-seryl-[protein] + H2O = L-seryl-[protein] + phosphate. It catalyses the reaction O-phospho-L-threonyl-[protein] + H2O = L-threonyl-[protein] + phosphate. The sequence is that of Probable protein phosphatase 2C 67 from Oryza sativa subsp. japonica (Rice).